A 380-amino-acid chain; its full sequence is Flap endonuclease 1 (380 aa).

The N-domain stretch occupies residues 1 to 105; it reads MGIKGLAQVL…GELAKRVARH (105 aa). Residue Asp34 coordinates Mg(2+). Residues Arg47 and Arg71 each contribute to the DNA site. Mg(2+) contacts are provided by Asp87, Glu159, Glu161, Asp180, and Asp182. The I-domain stretch occupies residues 123–254; the sequence is MVDRFAKRTV…ARAVELIRQY (132 aa). Glu159 serves as a coordination point for DNA. 2 residues coordinate DNA: Gly232 and Asp234. Residue Asp234 coordinates Mg(2+). Positions 337 to 345 are interaction with PCNA; sequence PQGRLDSFF. The tract at residues 340–380 is disordered; sequence RLDSFFKPVPSSPKKPVDTKSKGSAKRKRDSNKGGESKKKR. Positions 342–353 are enriched in low complexity; that stretch reads DSFFKPVPSSPK. Ser350 and Ser351 each carry phosphoserine. Over residues 370–380 the composition is skewed to basic and acidic residues; the sequence is SNKGGESKKKR.

The protein belongs to the XPG/RAD2 endonuclease family. FEN1 subfamily. As to quaternary structure, interacts with PCNA. Three molecules of rad2 bind to one PCNA trimer with each molecule binding to one PCNA monomer. PCNA stimulates the nuclease activity without altering cleavage specificity. Mg(2+) serves as cofactor. Post-translationally, phosphorylated. Phosphorylation upon DNA damage induces relocalization to the nuclear plasma.

It localises to the nucleus. The protein resides in the nucleolus. The protein localises to the nucleoplasm. It is found in the mitochondrion. Structure-specific nuclease with 5'-flap endonuclease and 5'-3' exonuclease activities involved in DNA replication and repair. During DNA replication, cleaves the 5'-overhanging flap structure that is generated by displacement synthesis when DNA polymerase encounters the 5'-end of a downstream Okazaki fragment. It enters the flap from the 5'-end and then tracks to cleave the flap base, leaving a nick for ligation. Also involved in the long patch base excision repair (LP-BER) pathway, by cleaving within the apurinic/apyrimidinic (AP) site-terminated flap. Acts as a genome stabilization factor that prevents flaps from equilibrating into structures that lead to duplications and deletions. Also possesses 5'-3' exonuclease activity on nicked or gapped double-stranded DNA, and exhibits RNase H activity. Also involved in replication and repair of rDNA and in repairing mitochondrial DNA. This Schizosaccharomyces pombe (strain 972 / ATCC 24843) (Fission yeast) protein is Flap endonuclease 1.